The primary structure comprises 189 residues: Ion-translocating oxidoreductase complex subunit B (189 aa).

A hydrophobic region spans residues 1 to 26; it reads MSAVMIAVVLLGLLALVFGAILGFAA. The 4Fe-4S domain occupies 32–90; it reads EGDPLVDQVESLLPQTQCGQCGYPGCRPYAEAIAGGDQINKCPPGGTATMEKIAELMGV. Residues C49, C52, C57, C73, C114, C117, C120, C124, C144, C147, C150, and C154 each coordinate [4Fe-4S] cluster. 2 4Fe-4S ferredoxin-type domains span residues 105 to 134 and 136 to 164; these read KVAY…GAGK and MHTV…MLPV.

It belongs to the 4Fe4S bacterial-type ferredoxin family. RnfB subfamily. In terms of assembly, the complex is composed of six subunits: RnfA, RnfB, RnfC, RnfD, RnfE and RnfG. Requires [4Fe-4S] cluster as cofactor.

Its subcellular location is the cell inner membrane. Its function is as follows. Part of a membrane-bound complex that couples electron transfer with translocation of ions across the membrane. This Shewanella amazonensis (strain ATCC BAA-1098 / SB2B) protein is Ion-translocating oxidoreductase complex subunit B.